A 210-amino-acid chain; its full sequence is Riboflavin kinase (210 aa).

The interval 1 to 81 (MECRERRLAA…DLLRYFNIAS (81 aa)) is H-T-H motif-like. A riboflavin kinase region spans residues 82–210 (IRLVGRVVSG…GDVVEVEVLL (129 aa)). Residue 91–96 (GLGEGA) coordinates CDP. Residues Thr-120 and Asn-122 each coordinate Mg(2+). Residues Thr-177 and Glu-185 each contribute to the FMN site. A CDP-binding site is contributed by 190-193 (VKLR).

The protein belongs to the archaeal riboflavin kinase family. Mg(2+) serves as cofactor.

The catalysed reaction is riboflavin + CTP = CDP + FMN + H(+). The protein operates within cofactor biosynthesis; FMN biosynthesis; FMN from riboflavin (CTP route): step 1/1. Functionally, catalyzes the CTP-dependent phosphorylation of riboflavin (vitamin B2) to form flavin mononucleotide (FMN). This is Riboflavin kinase (ribK) from Pyrobaculum arsenaticum (strain DSM 13514 / JCM 11321 / PZ6).